A 940-amino-acid polypeptide reads, in one-letter code: UvrABC system protein A (940 aa).

32-39 (GLSGSGKS) is an ATP binding site. The segment at 252-279 (CIDCGISIDEISPRLFSFNSPFGKCDYC) adopts a C4-type zinc-finger fold. ABC transporter domains follow at residues 309 to 589 (WANT…EGSL) and 609 to 937 (SNGK…HYLK). 641–648 (GVSGSGKS) contacts ATP. A C4-type zinc finger spans residues 740 to 766 (CEACKGDGIIKIEMQFLSDVYVPCEIC).

It belongs to the ABC transporter superfamily. UvrA family. As to quaternary structure, forms a heterotetramer with UvrB during the search for lesions.

The protein localises to the cytoplasm. Functionally, the UvrABC repair system catalyzes the recognition and processing of DNA lesions. UvrA is an ATPase and a DNA-binding protein. A damage recognition complex composed of 2 UvrA and 2 UvrB subunits scans DNA for abnormalities. When the presence of a lesion has been verified by UvrB, the UvrA molecules dissociate. This is UvrABC system protein A from Clostridium tetani (strain Massachusetts / E88).